Reading from the N-terminus, the 87-residue chain is Small ribosomal subunit protein uS15c (87 aa).

Belongs to the universal ribosomal protein uS15 family. As to quaternary structure, part of the 30S ribosomal subunit.

Its subcellular location is the plastid. The protein localises to the chloroplast. The sequence is that of Small ribosomal subunit protein uS15c (rps15) from Atropa belladonna (Belladonna).